The chain runs to 145 residues: 3-dehydroquinate dehydratase (145 aa).

Tyrosine 23 (proton acceptor) is an active-site residue. Substrate is bound by residues asparagine 74, histidine 80, and aspartate 87. The Proton donor role is filled by histidine 100. Residues 101 to 102 (IS) and arginine 111 contribute to the substrate site.

It belongs to the type-II 3-dehydroquinase family. As to quaternary structure, homododecamer.

The enzyme catalyses 3-dehydroquinate = 3-dehydroshikimate + H2O. Its pathway is metabolic intermediate biosynthesis; chorismate biosynthesis; chorismate from D-erythrose 4-phosphate and phosphoenolpyruvate: step 3/7. Its function is as follows. Catalyzes a trans-dehydration via an enolate intermediate. The polypeptide is 3-dehydroquinate dehydratase (Dictyoglomus turgidum (strain DSM 6724 / Z-1310)).